A 492-amino-acid polypeptide reads, in one-letter code: Homoserine O-acetyltransferase (492 aa).

Residues 47–352 (NAILVFHALS…KSIYGHDAFL (306 aa)) form the AB hydrolase-1 domain. The active-site Nucleophile is the serine 152. Arginine 221 contacts substrate. Residues aspartate 315 and histidine 348 contribute to the active site. Aspartate 349 serves as a coordination point for substrate. CBS domains are found at residues 375–431 (MTKN…ENSI) and 440–492 (MTKN…TITI).

This sequence belongs to the AB hydrolase superfamily. MetX family. In terms of assembly, homodimer.

The protein localises to the cytoplasm. The enzyme catalyses L-homoserine + acetyl-CoA = O-acetyl-L-homoserine + CoA. It participates in amino-acid biosynthesis; L-methionine biosynthesis via de novo pathway; O-acetyl-L-homoserine from L-homoserine: step 1/1. Transfers an acetyl group from acetyl-CoA to L-homoserine, forming acetyl-L-homoserine. The protein is Homoserine O-acetyltransferase of Methanococcus vannielii (strain ATCC 35089 / DSM 1224 / JCM 13029 / OCM 148 / SB).